The primary structure comprises 286 residues: Ribonuclease H1 (286 aa).

Basic and acidic residues predominate over residues 101 to 115 (EPLDGDGHESAEPYA). Residues 101–127 (EPLDGDGHESAEPYAKHMKPSVEPAPP) form a disordered region. The RNase H type-1 domain maps to 136-282 (MGDFVVVYTD…ADRLAREGAK (147 aa)). Positions 145, 186, 210, and 274 each coordinate Mg(2+).

The protein belongs to the RNase H family. In terms of assembly, monomer. It depends on Mg(2+) as a cofactor. In terms of tissue distribution, ubiquitous.

It is found in the cytoplasm. It catalyses the reaction Endonucleolytic cleavage to 5'-phosphomonoester.. With respect to regulation, in the presence of magnesium, manganese is inhibitory. Functionally, endonuclease that specifically degrades the RNA of RNA-DNA hybrids. Plays a role in RNA polymerase II (RNAp II) transcription termination by degrading R-loop RNA-DNA hybrid formation at G-rich pause sites located downstream of the poly(A) site and behind the elongating RNAp II. The protein is Ribonuclease H1 (RNASEH1) of Homo sapiens (Human).